A 452-amino-acid polypeptide reads, in one-letter code: Phosphoglucosamine mutase (452 aa).

S108 functions as the Phosphoserine intermediate in the catalytic mechanism. Mg(2+) is bound by residues S108, D247, D249, and D251. Phosphoserine is present on S108.

It belongs to the phosphohexose mutase family. It depends on Mg(2+) as a cofactor. In terms of processing, activated by phosphorylation.

It catalyses the reaction alpha-D-glucosamine 1-phosphate = D-glucosamine 6-phosphate. In terms of biological role, catalyzes the conversion of glucosamine-6-phosphate to glucosamine-1-phosphate. The polypeptide is Phosphoglucosamine mutase (Paraburkholderia phymatum (strain DSM 17167 / CIP 108236 / LMG 21445 / STM815) (Burkholderia phymatum)).